The primary structure comprises 453 residues: 3-phosphoshikimate 1-carboxyvinyltransferase (453 aa).

The disordered stretch occupies residues 1–27 (MSHDSEPQPVTATPGGPLNGSLKPPGD). Residues K28, S29, and R33 each contribute to the 3-phosphoshikimate site. A phosphoenolpyruvate-binding site is contributed by K28. The phosphoenolpyruvate site is built by G101 and R129. Residues S175, Q177, D330, and K357 each coordinate 3-phosphoshikimate. Q177 provides a ligand contact to phosphoenolpyruvate. D330 acts as the Proton acceptor in catalysis. Residues R361 and R405 each contribute to the phosphoenolpyruvate site.

It belongs to the EPSP synthase family. Monomer.

It is found in the cytoplasm. The enzyme catalyses 3-phosphoshikimate + phosphoenolpyruvate = 5-O-(1-carboxyvinyl)-3-phosphoshikimate + phosphate. It participates in metabolic intermediate biosynthesis; chorismate biosynthesis; chorismate from D-erythrose 4-phosphate and phosphoenolpyruvate: step 6/7. In terms of biological role, catalyzes the transfer of the enolpyruvyl moiety of phosphoenolpyruvate (PEP) to the 5-hydroxyl of shikimate-3-phosphate (S3P) to produce enolpyruvyl shikimate-3-phosphate and inorganic phosphate. This chain is 3-phosphoshikimate 1-carboxyvinyltransferase, found in Methylorubrum extorquens (strain CM4 / NCIMB 13688) (Methylobacterium extorquens).